Here is a 358-residue protein sequence, read N- to C-terminus: Serine/threonine-protein phosphatase 2A activator 2 (358 aa).

Belongs to the PTPA-type PPIase family.

It is found in the cytoplasm. The catalysed reaction is [protein]-peptidylproline (omega=180) = [protein]-peptidylproline (omega=0). PPIases accelerate the folding of proteins. It catalyzes the cis-trans isomerization of proline imidic peptide bonds in oligopeptides. Acts as a regulatory subunit for PP2A-like phosphatases modulating their activity or substrate specificity, probably by inducing a conformational change in the catalytic subunit, a direct target of the PPIase. Can reactivate inactive phosphatase PP2A-phosphatase methylesterase complexes (PP2Ai) in presence of ATP and Mg(2+) by dissociating the inactive form from the complex. The polypeptide is Serine/threonine-protein phosphatase 2A activator 2 (RRD2) (Candida albicans (strain SC5314 / ATCC MYA-2876) (Yeast)).